We begin with the raw amino-acid sequence, 210 residues long: Casparian strip membrane protein 1 (210 aa).

A disordered region spans residues 1–25 (MEKSEATTIDVAETSRESKGKAPLL). At 1–48 (MEKSEATTIDVAETSRESKGKAPLLRDPPAWVPAAVERQRAAPAYKRG) the chain is on the cytoplasmic side. The chain crosses the membrane as a helical span at residues 49–69 (VAIFDLILRISAATAALAATI). Over 70-98 (TMGTTEQTLPFFTQFFQFQASYDDLPTFT) the chain is Extracellular. Residues 99 to 119 (FFVIAMSIVTGYLVLSVPFSI) traverse the membrane as a helical segment. Over 120–138 (VCIARPVAAAPRLLLILCD) the chain is Cytoplasmic. A helical membrane pass occupies residues 139 to 159 (TLAVTLNTSAAGASAAIVYLA). Topologically, residues 160–183 (HNGNSDANWLAICQQFNDFCQRTS) are extracellular. The helical transmembrane segment at 184-204 (GAVVASFVAVVLLIFLVVLSA) threads the bilayer. Residues 205 to 210 (SALKKH) lie on the Cytoplasmic side of the membrane.

This sequence belongs to the Casparian strip membrane proteins (CASP) family. In terms of assembly, homodimer and heterodimers.

The protein localises to the cell membrane. Regulates membrane-cell wall junctions and localized cell wall deposition. Required for establishment of the Casparian strip membrane domain (CSD) and the subsequent formation of Casparian strips, a cell wall modification of the root endodermis that determines an apoplastic barrier between the intraorganismal apoplasm and the extraorganismal apoplasm and prevents lateral diffusion. The protein is Casparian strip membrane protein 1 of Erythranthe guttata (Yellow monkey flower).